A 358-amino-acid chain; its full sequence is Peroxisome biogenesis protein 3-1 (358 aa).

Residues 15–32 (ILVTTTCLGSGYLLYKLY) form a helical membrane-spanning segment. Positions 33 to 62 (NAHTRKLADLERELANERENDEIIKTQMKA) form a coiled coil.

It belongs to the peroxin-3 family.

It localises to the peroxisome membrane. Involved in morphology determination of peroxisomes, but not in import of peroxisomal matrix proteins. May act as a docking factor for PEX19 and be necessary for the import of peroxisomal membrane proteins in the peroxisomes. This chain is Peroxisome biogenesis protein 3-1 (PEX3-1), found in Arabidopsis thaliana (Mouse-ear cress).